Consider the following 300-residue polypeptide: Phospholipase A1 (300 aa).

Cysteines 4 and 87 form a disulfide. Residue Ser-137 is the Nucleophile of the active site. Asp-165 acts as the Charge relay system in catalysis. Cystine bridges form between Cys-176/Cys-181 and Cys-218/Cys-227. The active-site Charge relay system is His-229. Intrachain disulfides connect Cys-244–Cys-268, Cys-245–Cys-293, and Cys-261–Cys-266.

The protein belongs to the AB hydrolase superfamily. Lipase family. As to expression, expressed by the venom gland.

Its subcellular location is the secreted. The enzyme catalyses a 1,2-diacyl-sn-glycero-3-phosphocholine + H2O = a 2-acyl-sn-glycero-3-phosphocholine + a fatty acid + H(+). With respect to regulation, local inflammatory effects are inhibited by antiserotonin drugs (cyproheptadine and methysergide), indomethacin, betamethasone, and antihistamine (chlorpheniramine). Functionally, catalyzes the hydrolysis of phosphatidylcholine with phospholipase A1 activity. Shows potent hemolytic activity that is responsible for its lethal effect. May act as an allergen. In vivo, induces local inflammatory effects. The sequence is that of Phospholipase A1 from Vespa basalis (Hornet).